Reading from the N-terminus, the 836-residue chain is DNA-directed RNA polymerase subunit beta' (836 aa).

Residues cysteine 71, cysteine 73, cysteine 90, and cysteine 93 each coordinate Zn(2+). Mg(2+) is bound by residues aspartate 623, aspartate 625, and aspartate 627.

This sequence belongs to the RNA polymerase beta' chain family. RpoC1 subfamily. In terms of assembly, in plastids the minimal PEP RNA polymerase catalytic core is composed of four subunits: alpha, beta, beta', and beta''. When a (nuclear-encoded) sigma factor is associated with the core the holoenzyme is formed, which can initiate transcription. Requires Mg(2+) as cofactor. The cofactor is Zn(2+).

It localises to the plastid. The protein localises to the chloroplast. It carries out the reaction RNA(n) + a ribonucleoside 5'-triphosphate = RNA(n+1) + diphosphate. In terms of biological role, DNA-dependent RNA polymerase catalyzes the transcription of DNA into RNA using the four ribonucleoside triphosphates as substrates. The polypeptide is DNA-directed RNA polymerase subunit beta' (rpoC1) (Chlorella vulgaris (Green alga)).